Here is a 151-residue protein sequence, read N- to C-terminus: Allatostatin-A (151 aa).

The first 21 residues, 1–21, serve as a signal peptide directing secretion; the sequence is MNSLHAHLLLLAVCCVGYIAS. Residues 22 to 54 constitute a propeptide that is removed on maturation; it reads SPVIGQDQRSGDSDADVLLAADEMADNGGDNID. L64, L88, and L99 each carry leucine amide. The propeptide occupies 103–135; the sequence is SDYDYDQDNEIDYRVPPANYLAAERAVRPGRQN. Residues 131 to 151 form a disordered region; that stretch reads PGRQNKRTTRPQPFNFGLGRR. A Leucine amide modification is found at L148.

The protein belongs to the allatostatin family.

The protein resides in the secreted. In terms of biological role, may act as a neurotransmitter or neuromodulator. This Drosophila melanogaster (Fruit fly) protein is Allatostatin-A (AstA).